The primary structure comprises 430 residues: Proteasome-activating nucleotidase (430 aa).

Positions 9 to 89 form a coiled coil; it reads TELKKEKKAF…LRRELDRMRV (81 aa). ATP contacts are provided by residues 214-219 and histidine 353; that span reads GTGKTL. The segment at 428–430 is docks into pockets in the proteasome alpha-ring to cause gate opening; that stretch reads LYR.

This sequence belongs to the AAA ATPase family. In terms of assembly, homohexamer. The hexameric complex has a two-ring architecture resembling a top hat that caps the 20S proteasome core at one or both ends. Alone, can form a complex composed of two stacked hexameric rings in vitro. Upon ATP-binding, the C-terminus of PAN interacts with the alpha-rings of the proteasome core by binding to the intersubunit pockets.

The protein resides in the cytoplasm. Its activity is regulated as follows. ATPase activity is inhibited by EDTA, N-ethylmaleimide (NEM) and p-chloromercuriphenyl-sulfonic acid (PCMS) in vitro. Its function is as follows. ATPase which is responsible for recognizing, binding, unfolding and translocation of substrate proteins into the archaeal 20S proteasome core particle. Is essential for opening the gate of the 20S proteasome via an interaction with its C-terminus, thereby allowing substrate entry and access to the site of proteolysis. Thus, the C-termini of the proteasomal ATPase function like a 'key in a lock' to induce gate opening and therefore regulate proteolysis. Unfolding activity requires energy from ATP hydrolysis, whereas ATP binding alone promotes ATPase-20S proteasome association which triggers gate opening, and supports translocation of unfolded substrates. In addition to ATP, is able to cleave other nucleotide triphosphates such as CTP, GTP and UTP, but hydrolysis of these other nucleotides is less effective in promoting proteolysis than ATP. Moreover, PAN by itself can function as a chaperone in vitro. In Methanocaldococcus jannaschii (strain ATCC 43067 / DSM 2661 / JAL-1 / JCM 10045 / NBRC 100440) (Methanococcus jannaschii), this protein is Proteasome-activating nucleotidase.